Reading from the N-terminus, the 939-residue chain is Tyrosine-protein kinase Shark (939 aa).

The SH2 1 domain maps to 10-106; that stretch reads WYHGNLSREA…GLPTKLTVPL (97 aa). ANK repeat units follow at residues 153-185, 186-218, and 220-252; these read DGQT…SSDS, FGCQ…GRNI, and NGYV…PRTS. One can recognise an SH2 2 domain in the interval 288-403; sequence WYHGTLTREE…GLPVSLKYPV (116 aa). Disordered regions lie at residues 410–446 and 476–505; these read EVPS…QHPH and ALFD…SLAG. Polar residues predominate over residues 496 to 505; that stretch reads ESSVSGSLAG. Residues 662–921 form the Protein kinase domain; the sequence is LVLDREIGHG…PTFVYLTEFF (260 aa). ATP contacts are provided by residues 668 to 676 and K698; that span reads IGHGEFGSV. D789 acts as the Proton acceptor in catalysis. Y927 carries the post-translational modification Phosphotyrosine.

This sequence belongs to the protein kinase superfamily. Tyr protein kinase family. Interacts with drpr; this is required for the recruitment of drpr and glial cells to severed axons and for the phagocytosis of axonal debris by glial cells following axon injury. In terms of tissue distribution, gastrulation embryos show expression in ectodermal cells along the cephalic furrow and ventral midline. Proctodeum, stomodeum and their derived structures (foregut, atrium, pharynx, esophagus and hindgut) continue to show expression from stage 8-9 to late embryos. Other ectodermally derived structures (frontal sac, salivary gland and labium) and developing tracheal system also show expression.

It localises to the cytoplasm. The enzyme catalyses L-tyrosyl-[protein] + ATP = O-phospho-L-tyrosyl-[protein] + ADP + H(+). In terms of biological role, following axon injury, required for recruitment of drpr and glial cells to severed axons and for glial clearance of severed axons from the central nervous system. Together with Src42a and drpr, promotes the migration of macrophages to sites of wounding as part of a signaling cascade where Scr42a detects production of hydrogen peroxide at wound sites which triggers phosphorylation of drpr and subsequent recruitment and activation of shark. May be involved in signal transduction on the apical surface of ectodermal epithelial cells, regulating their polarity during invagination. Crumbs (crb) may be the intracellular signal. In Drosophila melanogaster (Fruit fly), this protein is Tyrosine-protein kinase Shark.